The following is a 155-amino-acid chain: Transcription antitermination protein NusB (155 aa).

The protein belongs to the NusB family.

Its function is as follows. Involved in transcription antitermination. Required for transcription of ribosomal RNA (rRNA) genes. Binds specifically to the boxA antiterminator sequence of the ribosomal RNA (rrn) operons. In Ralstonia pickettii (strain 12J), this protein is Transcription antitermination protein NusB.